Reading from the N-terminus, the 390-residue chain is Leu/Ile/Val-binding protein homolog 6 (390 aa).

Positions 1–21 (MKKIALTALAVFSLAASAAYA) are cleaved as a signal peptide.

It belongs to the leucine-binding protein family.

In terms of biological role, component of an amino-acid transport system. The polypeptide is Leu/Ile/Val-binding protein homolog 6 (Brucella abortus (strain 2308)).